The primary structure comprises 257 residues: 4-hydroxy-tetrahydrodipicolinate reductase (257 aa).

NAD(+) contacts are provided by residues Gly8–Val13, Ala90–Thr92, and Ala114–Met117. The Proton donor/acceptor role is filled by His146. Position 147 (His147) interacts with (S)-2,3,4,5-tetrahydrodipicolinate. Lys150 acts as the Proton donor in catalysis. Gly156–Thr157 contacts (S)-2,3,4,5-tetrahydrodipicolinate.

The protein belongs to the DapB family.

It is found in the cytoplasm. It carries out the reaction (S)-2,3,4,5-tetrahydrodipicolinate + NAD(+) + H2O = (2S,4S)-4-hydroxy-2,3,4,5-tetrahydrodipicolinate + NADH + H(+). It catalyses the reaction (S)-2,3,4,5-tetrahydrodipicolinate + NADP(+) + H2O = (2S,4S)-4-hydroxy-2,3,4,5-tetrahydrodipicolinate + NADPH + H(+). The protein operates within amino-acid biosynthesis; L-lysine biosynthesis via DAP pathway; (S)-tetrahydrodipicolinate from L-aspartate: step 4/4. Catalyzes the conversion of 4-hydroxy-tetrahydrodipicolinate (HTPA) to tetrahydrodipicolinate. The sequence is that of 4-hydroxy-tetrahydrodipicolinate reductase from Aliarcobacter butzleri (strain RM4018) (Arcobacter butzleri).